The chain runs to 156 residues: ATP synthase subunit b (156 aa).

Residues 7-27 (LIGQAIWFALFVFFCMKFVWP) form a helical membrane-spanning segment.

It belongs to the ATPase B chain family. In terms of assembly, F-type ATPases have 2 components, F(1) - the catalytic core - and F(0) - the membrane proton channel. F(1) has five subunits: alpha(3), beta(3), gamma(1), delta(1), epsilon(1). F(0) has three main subunits: a(1), b(2) and c(10-14). The alpha and beta chains form an alternating ring which encloses part of the gamma chain. F(1) is attached to F(0) by a central stalk formed by the gamma and epsilon chains, while a peripheral stalk is formed by the delta and b chains.

It localises to the cell inner membrane. Its function is as follows. F(1)F(0) ATP synthase produces ATP from ADP in the presence of a proton or sodium gradient. F-type ATPases consist of two structural domains, F(1) containing the extramembraneous catalytic core and F(0) containing the membrane proton channel, linked together by a central stalk and a peripheral stalk. During catalysis, ATP synthesis in the catalytic domain of F(1) is coupled via a rotary mechanism of the central stalk subunits to proton translocation. Component of the F(0) channel, it forms part of the peripheral stalk, linking F(1) to F(0). In Alcanivorax borkumensis (strain ATCC 700651 / DSM 11573 / NCIMB 13689 / SK2), this protein is ATP synthase subunit b.